The sequence spans 1002 residues: Copper-transporting ATPase HMA5 (1002 aa).

Positions Arg-32–Ala-48 are enriched in low complexity. The disordered stretch occupies residues Arg-32–Leu-63. Residues Gly-49–Asp-60 are compositionally biased toward gly residues. HMA domains are found at residues Lys-75–Lys-141, Leu-153–Ile-219, and Ser-228–Leu-294. Residues Cys-86, Cys-89, Cys-164, and Cys-167 each contribute to the Cu(+) site. Helical transmembrane passes span Phe-320–Ile-340, Met-354–Gly-374, Met-392–Leu-412, Phe-425–Leu-445, Val-585–Gly-605, Leu-624–Ala-644, Tyr-943–Pro-963, and Trp-972–Leu-992.

The protein belongs to the cation transport ATPase (P-type) (TC 3.A.3) family. Type IB subfamily. As to expression, expressed in root pericycle cells, xylem region of diffuse vascular bundles in the first node, and vascular tissues of peduncle, rachis and husk.

It is found in the cell membrane. The enzyme catalyses Cu(+)(in) + ATP + H2O = Cu(+)(out) + ADP + phosphate + H(+). Copper (Cu) transporter that plays an essential role in promoting translocation of Cu from roots to shoots. Involved in loading Cu to the xylem of the roots and other organs, including panicles. In Oryza sativa subsp. japonica (Rice), this protein is Copper-transporting ATPase HMA5.